The following is a 380-amino-acid chain: GDSL esterase/lipase At3g26430 (380 aa).

The signal sequence occupies residues 1-25; that stretch reads METNLLLVKCVLLASCLIHPRACSP. S38 acts as the Nucleophile in catalysis. 3 N-linked (GlcNAc...) asparagine glycosylation sites follow: N97, N115, and N183. Residues D346 and H349 contribute to the active site.

It belongs to the 'GDSL' lipolytic enzyme family.

It localises to the secreted. The enzyme catalyses hexadecanoate ester + H2O = an aliphatic alcohol + hexadecanoate + H(+). The catalysed reaction is a butanoate ester + H2O = an aliphatic alcohol + butanoate + H(+). Lipase activity is inhibited by phenylmethylsulfonyl fluoride (PMSF), but not neostigmine bromide (NB). Lipase that can hydrolyze p-nitrophenyl butyrate and p-nitrophenyl palmitate in vitro. Possesses low activity against p-nitrophenyl acetate. Substrate preference is p-nitrophenyl palmitate &gt; p-nitrophenyl butyrate &gt;&gt; p-nitrophenyl acetate. Lacks cholinesterase activity. This is GDSL esterase/lipase At3g26430 from Arabidopsis thaliana (Mouse-ear cress).